A 1082-amino-acid chain; its full sequence is Sodium/potassium exporting P-type ATPase 2 (1082 aa).

The Cytoplasmic segment spans residues 1–75 (MSSINTNVAE…GANTLGDGDK (75 aa)). A helical membrane pass occupies residues 76–96 (ISLTKIIAHQVCNAMILVLII). Over 97 to 98 (SM) the chain is Extracellular. A helical membrane pass occupies residues 99–119 (VIALAIKDWISGGVIGFVVLI). At 120-308 (NISVGFVQEY…VGTPLQRKLS (189 aa)) the chain is on the cytoplasmic side. Residues 309–329 (WLAIFLFWGCRYFCNYCNGIP) traverse the membrane as a helical segment. At 330 to 336 (KNRVNKE) the chain is on the extracellular side. A helical transmembrane segment spans residues 337–357 (VAIYAICVALSMIPSALIVVL). The Cytoplasmic portion of the chain corresponds to 358–807 (TITMAVGAQV…RMSSNIQKFV (450 aa)). Asp393 functions as the 4-aspartylphosphate intermediate in the catalytic mechanism. Positions 393 and 395 each coordinate Mg(2+). 9 residues coordinate ATP: Thr395, Glu499, Lys552, Arg604, Thr664, Gly665, Asp666, Arg723, and Lys729. Residue Asp748 participates in Mg(2+) binding. An ATP-binding site is contributed by Asn751. A helical membrane pass occupies residues 808–828 (LQLLAENVAQALYLMVGLAFI). Residues 829 to 832 (DDSG) are Extracellular-facing. Residues 833 to 853 (LSVFPLSPVEVLWILVVTSCF) traverse the membrane as a helical segment. The Cytoplasmic portion of the chain corresponds to 854 to 884 (PAMDLGQERASDDILEESPNSTIFTWEVIID). Residues 885 to 905 (MIVYGFWMAVCCLVCFVIIVY) form a helical membrane-spanning segment. Residues 906–935 (GEGDPYLGVNCNKSSSSNSDVCELVFRGRS) lie on the Extracellular side of the membrane. The chain crosses the membrane as a helical span at residues 936-956 (ASFATMTWCALILAWECIHPY). Over 957-983 (NSLFYMRQDTDHPWWKQTVIDLWDNQF) the chain is Cytoplasmic. A helical membrane pass occupies residues 984-1004 (LFWSVAIGFISVFPVVYIPVI). The Extracellular portion of the chain corresponds to 1005–1007 (NTK). The chain crosses the membrane as a helical span at residues 1008–1028 (VFLHGPIGYEWGLAVGFSILF). Topologically, residues 1029 to 1082 (LAGSELWKWIKRIHKRKANKKAKNPEYELERSDPFKKYASFSRSNTMDRPELMV) are cytoplasmic.

This sequence belongs to the cation transport ATPase (P-type) (TC 3.A.3) family. Type IID subfamily. Mg(2+) serves as cofactor. The active site is phosphorylated in presence of sodium or potassium and in conditions of higher pH. Not phosphorylated in presence of calcium ions.

The protein localises to the cell membrane. The catalysed reaction is Na(+)(in) + ATP + H2O = Na(+)(out) + ADP + phosphate + H(+). It carries out the reaction K(+)(in) + ATP + H2O = K(+)(out) + ADP + phosphate + H(+). Its function is as follows. Catalyzes the hydrolysis of ATP coupled with the export of sodium and potassium from the cell. May be an inefficient sodium exporter. May transport other cations such as lithium. Sodium/potassium efflux ATPases are involved in salt tolerance and maintaining the membrane potential across the plasma membrane in high salinity (Na+) or alkaline (K+) environments. The protein is Sodium/potassium exporting P-type ATPase 2 of Schwanniomyces occidentalis (Yeast).